Reading from the N-terminus, the 439-residue chain is uncharacterized protein (439 aa).

2 consecutive CBS domains span residues 195–254 (LTPA…SIEK) and 256–314 (MTKN…KQPQ).

This is an uncharacterized protein from Bacillus subtilis (strain 168).